A 180-amino-acid polypeptide reads, in one-letter code: Sec-independent protein translocase protein TatB (180 aa).

The helical transmembrane segment at 1-21 threads the bilayer; that stretch reads MFDIGWSELLVIGVVALIAIG. A disordered region spans residues 77–180; it reads TRGDLMTRLT…DQTARGAKAS (104 aa). Residues 105–129 are compositionally biased toward low complexity; that stretch reads ADKPSVSSDAASASGSAAPEAGAAE.

Belongs to the TatB family. The Tat system comprises two distinct complexes: a TatABC complex, containing multiple copies of TatA, TatB and TatC subunits, and a separate TatA complex, containing only TatA subunits. Substrates initially bind to the TatABC complex, which probably triggers association of the separate TatA complex to form the active translocon.

Its subcellular location is the cell inner membrane. Part of the twin-arginine translocation (Tat) system that transports large folded proteins containing a characteristic twin-arginine motif in their signal peptide across membranes. Together with TatC, TatB is part of a receptor directly interacting with Tat signal peptides. TatB may form an oligomeric binding site that transiently accommodates folded Tat precursor proteins before their translocation. The sequence is that of Sec-independent protein translocase protein TatB from Nitrobacter winogradskyi (strain ATCC 25391 / DSM 10237 / CIP 104748 / NCIMB 11846 / Nb-255).